The following is a 588-amino-acid chain: Lamin-B1 (588 aa).

The span at 1 to 12 (MATATPVQQQRA) shows a compositional bias: polar residues. Residues 1 to 34 (MATATPVQQQRAGSRASAPATPLSPTRLSRLQEK) are disordered. Ala-2 bears the N-acetylalanine mark. The segment at 2–35 (ATATPVQQQRAGSRASAPATPLSPTRLSRLQEKE) is head. 2 positions are modified to phosphothreonine: Thr-3 and Thr-5. Omega-N-methylarginine is present on Arg-15. Position 17 is a phosphoserine (Ser-17). Phosphothreonine is present on Thr-21. Ser-24 bears the Phosphoserine mark. At Thr-26 the chain carries Phosphothreonine. Ser-29 carries the phosphoserine modification. The IF rod domain maps to 33–389 (EKEELRELND…KLLEGEEERL (357 aa)). A coil 1A region spans residues 36-70 (ELRELNDRLAVYIDKVRSLETENSALQLQVTEREE). The linker 1 stretch occupies residues 71–82 (VRGRELTGLKAL). The interval 83–216 (YETELADARR…EFRKNMYEEE (134 aa)) is coil 1B. A Glycyl lysine isopeptide (Lys-Gly) (interchain with G-Cter in SUMO2) cross-link involves residue Lys-103. Lys-112 bears the N6-acetyllysine mark. A Glycyl lysine isopeptide (Lys-Gly) (interchain with G-Cter in SUMO2) cross-link involves residue Lys-124. A Phosphoserine modification is found at Ser-127. Lys-146 is covalently cross-linked (Glycyl lysine isopeptide (Lys-Gly) (interchain with G-Cter in SUMO2)). Lys-158 bears the N6-acetyllysine; alternate mark. Residue Lys-158 forms a Glycyl lysine isopeptide (Lys-Gly) (interchain with G-Cter in SUMO2); alternate linkage. Position 159 is a phosphoserine (Ser-159). A Glycyl lysine isopeptide (Lys-Gly) (interchain with G-Cter in SUMO2) cross-link involves residue Lys-182. 2 positions are modified to phosphoserine: Ser-201 and Ser-233. The linker 2 stretch occupies residues 217–244 (INETRRKHETRLVEVDSGRQIEYEYKLA). Residues Lys-242 and Lys-262 each participate in a glycyl lysine isopeptide (Lys-Gly) (interchain with G-Cter in SUMO2) cross-link. A coil 2 region spans residues 245–387 (QALHEMREQH…YRKLLEGEEE (143 aa)). The residue at position 272 (Lys-272) is an N6-acetyllysine; alternate. Residue Lys-272 forms a Glycyl lysine isopeptide (Lys-Gly) (interchain with G-Cter in SUMO2); alternate linkage. A phosphoserine mark is found at Ser-279 and Ser-303. Residue Lys-313 forms a Glycyl lysine isopeptide (Lys-Gly) (interchain with G-Cter in SUMO2) linkage. Lys-331 is subject to N6-acetyllysine; alternate. Lys-331 is covalently cross-linked (Glycyl lysine isopeptide (Lys-Gly) (interchain with G-Cter in SUMO2); alternate). Ser-376 and Ser-394 each carry phosphoserine. The interval 388-588 (RLKLSPSPSS…RASNKSCAIM (201 aa)) is tail. Residues 391 to 410 (LSPSPSSRVTVSRASSSRSV) show a composition bias toward low complexity. Positions 391-433 (LSPSPSSRVTVSRASSSRSVRTTRGKRKRVDVEESEASSSVSI) are disordered. Residue Thr-400 is glycosylated (O-linked (GlcNAc) threonine). At Arg-414 the chain carries Omega-N-methylarginine. A Nuclear localization signal motif is present at residues 416–421 (KRKRVD). An LTD domain is found at 431 to 547 (VSISHSASAT…EEVAQRSTVF (117 aa)). Lys-484 carries the post-translational modification N6-acetyllysine. A Glycyl lysine isopeptide (Lys-Gly) (interchain with G-Cter in SUMO2) cross-link involves residue Lys-533. Ser-535 carries the post-translational modification Phosphoserine. Residue Lys-548 forms a Glycyl lysine isopeptide (Lys-Gly) (interchain with G-Cter in SUMO2) linkage. A Cysteine methyl ester modification is found at Cys-585. The S-farnesyl cysteine moiety is linked to residue Cys-585. Positions 586–588 (AIM) are cleaved as a propeptide — removed in mature form.

This sequence belongs to the intermediate filament family. As to quaternary structure, homodimer. Lamin dimers then assemble into dimeric head-to-tail polymers. Ultimately, two head-to-tail polymers assemble laterally into a protofilament with a uniformly shaped rod of 3.5 nm in diameter. Interacts with SPAG4 and SEPT12. In terms of processing, B-type lamins undergo a series of modifications, such as farnesylation and phosphorylation. Increased phosphorylation of the lamins occurs before envelope disintegration and probably plays a role in regulating lamin associations. Post-translationally, phosphorylation plays a key role in lamin organization, subcellular localization and nuclear envelope disintegration. Phosphorylation by CDK1 at Ser-24 and Ser-394 at the onset of mitosis drives lamin disassembly and nuclear envelope breakdown.

The protein localises to the nucleus lamina. Its function is as follows. Lamins are intermediate filament proteins that assemble into a filamentous meshwork, and which constitute the major components of the nuclear lamina, a fibrous layer on the nucleoplasmic side of the inner nuclear membrane. Lamins provide a framework for the nuclear envelope, bridging the nuclear envelope and chromatin, thereby playing an important role in nuclear assembly, chromatin organization, nuclear membrane and telomere dynamics. The structural integrity of the lamina is strictly controlled by the cell cycle, as seen by the disintegration and formation of the nuclear envelope in prophase and telophase, respectively. This is Lamin-B1 (Lmnb1) from Mus musculus (Mouse).